Here is a 631-residue protein sequence, read N- to C-terminus: UvrABC system protein C (631 aa).

Residues 26 to 105 enclose the GIY-YIG domain; the sequence is SSPGVYQFKN…IKELKPRYNV (80 aa). The UVR domain maps to 219-254; sequence SATIRSLNERMLSFAKELKFEQAAELKTQIDSLKRY.

The protein belongs to the UvrC family. As to quaternary structure, interacts with UvrB in an incision complex.

Its subcellular location is the cytoplasm. Functionally, the UvrABC repair system catalyzes the recognition and processing of DNA lesions. UvrC both incises the 5' and 3' sides of the lesion. The N-terminal half is responsible for the 3' incision and the C-terminal half is responsible for the 5' incision. This is UvrABC system protein C from Chlorobium phaeobacteroides (strain DSM 266 / SMG 266 / 2430).